The sequence spans 209 residues: Redox-sensing transcriptional repressor Rex (209 aa).

Positions Leu-16–Phe-55 form a DNA-binding region, H-T-H motif. Gly-90 to Gly-95 is a binding site for NAD(+).

This sequence belongs to the transcriptional regulatory Rex family. As to quaternary structure, homodimer.

It is found in the cytoplasm. Its function is as follows. Modulates transcription in response to changes in cellular NADH/NAD(+) redox state. This is Redox-sensing transcriptional repressor Rex from Bacillus cereus (strain G9842).